The chain runs to 312 residues: Putative S-adenosyl-L-methionine-dependent methyltransferase Mkms_0097 (312 aa).

S-adenosyl-L-methionine-binding positions include aspartate 134 and 163–164 (DL).

Belongs to the UPF0677 family.

Exhibits S-adenosyl-L-methionine-dependent methyltransferase activity. The sequence is that of Putative S-adenosyl-L-methionine-dependent methyltransferase Mkms_0097 from Mycobacterium sp. (strain KMS).